The primary structure comprises 290 residues: 4-hydroxybenzoate octaprenyltransferase (290 aa).

A run of 6 helical transmembrane segments spans residues Trp-41–Met-61, Trp-89–Leu-109, Phe-133–Phe-153, Asp-158–Tyr-178, Phe-202–Ile-224, and Trp-269–Gly-289.

It belongs to the UbiA prenyltransferase family. It depends on Mg(2+) as a cofactor.

It localises to the cell inner membrane. It catalyses the reaction all-trans-octaprenyl diphosphate + 4-hydroxybenzoate = 4-hydroxy-3-(all-trans-octaprenyl)benzoate + diphosphate. Its pathway is cofactor biosynthesis; ubiquinone biosynthesis. Catalyzes the prenylation of para-hydroxybenzoate (PHB) with an all-trans polyprenyl group. Mediates the second step in the final reaction sequence of ubiquinone-8 (UQ-8) biosynthesis, which is the condensation of the polyisoprenoid side chain with PHB, generating the first membrane-bound Q intermediate 3-octaprenyl-4-hydroxybenzoate. This is 4-hydroxybenzoate octaprenyltransferase from Burkholderia ambifaria (strain MC40-6).